Here is a 176-residue protein sequence, read N- to C-terminus: Thiol:disulfide interchange protein HelX (176 aa).

The N-terminal stretch at 1 to 19 is a signal peptide; it reads MAKPLMFLPLLVMAGFVGA. In terms of domain architecture, Thioredoxin spans 35–172; it reads ALAGKEAPAV…ITKKIDPLLA (138 aa). A disulfide bridge links Cys-75 with Cys-78.

This sequence belongs to the thioredoxin family. DsbE subfamily.

Its subcellular location is the periplasm. In terms of biological role, required for disulfide bond formation in some periplasmic proteins. Also acts as a disulfide oxidoreductase in cytochromes c biogenesis. The cysteines of apocytochromes c must be in the reduced state for covalent linkage between the two moieties to occur. This chain is Thiol:disulfide interchange protein HelX (helX), found in Rhodobacter capsulatus (strain ATCC BAA-309 / NBRC 16581 / SB1003).